The chain runs to 172 residues: Adenine phosphoribosyltransferase (172 aa).

It belongs to the purine/pyrimidine phosphoribosyltransferase family. In terms of assembly, homodimer.

It is found in the cytoplasm. It catalyses the reaction AMP + diphosphate = 5-phospho-alpha-D-ribose 1-diphosphate + adenine. It functions in the pathway purine metabolism; AMP biosynthesis via salvage pathway; AMP from adenine: step 1/1. In terms of biological role, catalyzes a salvage reaction resulting in the formation of AMP, that is energically less costly than de novo synthesis. This Ligilactobacillus salivarius (strain UCC118) (Lactobacillus salivarius) protein is Adenine phosphoribosyltransferase.